A 618-amino-acid chain; its full sequence is MPRSRGGRAAPGQAARWSGWRAPGRLLPLLPALCCLAAAAGAGKPAGADAPFAGQNWLKSYGYLLPYESRASALHSGKALQSAVSTMQQFYGIPVTGVLDQTTIEWMKKPRCGVPDHPHLSRRRRNKRYALTGQKWRQKHITYSIHNYTPKVGELDTRKAIRQAFDVWQKVTPLTFEEVPYHEIKSDRKEADIMIFFASGFHGDSSPFDGEGGFLAHAYFPGPGIGGDTHFDSDEPWTLGNANHDGNDLFLVAVHELGHALGLEHSNDPSAIMAPFYQYMETHNFKLPQDDLQGIQKIYGPPAEPLEPTRPLPTLPVRRIHSPSERKHERQPRPPRPPLGDRPSTPGAKPNICDGNFNTVALFRGEMFVFKDRWFWRLRNNRVQEGYPMQIEQFWKGLPARIDAAYERADGRFVFFKGDKYWVFKEVTVEPGYPHSLGELGSCLPREGIDTALRWEPVGKTYFFKGERYWRYSEERRATDPGYPKPITVWKGIPQAPQGAFISKEGYYTYFYKGRDYWKFDNQKLSVEPGYPRNILRDWMGCKQKEVERRKERRLPQDDVDIMVTIDDVPGSVNAVAVVVPCTLSLCLLVLLYTIFQFKNKTGPQPVTYYKRPVQEWV.

The first 41 residues, 1–41, serve as a signal peptide directing secretion; it reads MPRSRGGRAAPGQAARWSGWRAPGRLLPLLPALCCLAAAAG. Residues 42–128 constitute a propeptide that is removed on maturation; that stretch reads AGKPAGADAP…HLSRRRRNKR (87 aa). Residues 42–575 are Extracellular-facing; the sequence is AGKPAGADAP…IDDVPGSVNA (534 aa). The short motif at 110 to 117 is the Cysteine switch element; it reads PRCGVPDH. Residues C112 and H255 each contribute to the Zn(2+) site. Residue E256 is part of the active site. Zn(2+) is bound by residues H259 and H265. Residues 296–352 are disordered; that stretch reads QKIYGPPAEPLEPTRPLPTLPVRRIHSPSERKHERQPRPPRPPLGDRPSTPGAKPNI. Residues 302–314 show a composition bias toward pro residues; sequence PAEPLEPTRPLPT. Over residues 322-332 the composition is skewed to basic and acidic residues; it reads SPSERKHERQP. Hemopexin repeat units lie at residues 350-398, 399-444, 446-494, and 495-542; these read PNIC…WKGL, PARI…GSCL, REGI…KGIP, and QAPQ…WMGC. C353 and C542 are disulfide-bonded. The chain crosses the membrane as a helical span at residues 576-596; it reads VAVVVPCTLSLCLLVLLYTIF. Residues 597 to 618 are Cytoplasmic-facing; sequence QFKNKTGPQPVTYYKRPVQEWV. A PDZ-binding motif is present at residues 616 to 618; sequence EWV.

It belongs to the peptidase M10A family. Interacts (via PDZ-binding motif) with APBA3 (via PDZ domain). Interacts with GRIP1 and GRIP2. The cofactor is Zn(2+). Requires Ca(2+) as cofactor. Cleaved by a furin endopeptidase in the trans-Golgi network. In terms of tissue distribution, predominantly expressed in the nervous system: while enriched in the central nervous system, expression is also detected in the peripheral nervous system, including the trigeminal ganglion. Expression is not restricted to the nervous system: it is also enriched in the thymus, with a lower level of expression present in the aorta. In brain, high expression is present in the brain parenchyma, particularly within the neocortex.

The protein resides in the cell membrane. It is found in the golgi apparatus. Its subcellular location is the trans-Golgi network membrane. The protein localises to the secreted. It localises to the extracellular space. The protein resides in the extracellular matrix. Functionally, metalloprotease that mediates cleavage of N-cadherin (CDH2) and acts as a regulator of neuro-immune interactions and neural stem cell quiescence. Involved in cell-cell interactions between nociceptive neurites and mast cells, possibly by mediating cleavage of CDH2, thereby acting as a mediator of peripheral thermal nociception and inflammatory hyperalgesia. Key regulator of neural stem cells quiescence by mediating cleavage of CDH2, affecting CDH2-mediated anchorage of neural stem cells to ependymocytes in the adult subependymal zone, leading to modulate their quiescence. May play a role in axonal growth. Able to activate progelatinase A. May also be a proteoglycanase involved in degradation of proteoglycans, such as dermatan sulfate and chondroitin sulfate proteoglycans. Cleaves partially fibronectin, but not collagen type I, nor laminin. This Rattus norvegicus (Rat) protein is Matrix metalloproteinase-24 (Mmp24).